Reading from the N-terminus, the 378-residue chain is Ribosomal RNA large subunit methyltransferase G (378 aa).

Belongs to the methyltransferase superfamily. RlmG family.

It localises to the cytoplasm. It catalyses the reaction guanosine(1835) in 23S rRNA + S-adenosyl-L-methionine = N(2)-methylguanosine(1835) in 23S rRNA + S-adenosyl-L-homocysteine + H(+). Its function is as follows. Specifically methylates the guanine in position 1835 (m2G1835) of 23S rRNA. In Escherichia coli O6:K15:H31 (strain 536 / UPEC), this protein is Ribosomal RNA large subunit methyltransferase G.